The sequence spans 232 residues: GTP cyclohydrolase 1 (232 aa).

The segment at 1-24 (MSDNLKSYQDNHIENEDEEIYERS) is disordered. Residues C121, H124, and C192 each contribute to the Zn(2+) site.

This sequence belongs to the GTP cyclohydrolase I family. In terms of assembly, toroid-shaped homodecamer, composed of two pentamers of five dimers.

It catalyses the reaction GTP + H2O = 7,8-dihydroneopterin 3'-triphosphate + formate + H(+). The protein operates within cofactor biosynthesis; 7,8-dihydroneopterin triphosphate biosynthesis; 7,8-dihydroneopterin triphosphate from GTP: step 1/1. Its function is as follows. First enzyme in the biosynthesis of tetrahydrobiopterin (BH4). Catalyzes the conversion of GTP into dihydroneopterin triphosphate (7,8-dihydroneopterin 3'-triphosphate), which is subsequently catalyzed by 6-pyruvoyltetrahydropterin synthase (ptsA) and sepiapterin reductase (sprA). The sequence is that of GTP cyclohydrolase 1 (gchA) from Dictyostelium discoideum (Social amoeba).